Reading from the N-terminus, the 373-residue chain is Chaperone protein DnaJ (373 aa).

In terms of domain architecture, J spans 5-69 (DYYEVLGVNK…NKRVNYDQFG (65 aa)). Residues 130 to 212 (GTKKEISIKK…CKGKGTENKT (83 aa)) form a CR-type zinc finger. Residues C143, C146, C160, C163, C186, C189, C200, and C203 each coordinate Zn(2+). 4 CXXCXGXG motif repeats span residues 143-150 (CHTCNGDG), 160-167 (CSYCNGAG), 186-193 (CPKCEGSG), and 200-207 (CPTCKGKG).

The protein belongs to the DnaJ family. As to quaternary structure, homodimer. Requires Zn(2+) as cofactor.

The protein localises to the cytoplasm. Participates actively in the response to hyperosmotic and heat shock by preventing the aggregation of stress-denatured proteins and by disaggregating proteins, also in an autonomous, DnaK-independent fashion. Unfolded proteins bind initially to DnaJ; upon interaction with the DnaJ-bound protein, DnaK hydrolyzes its bound ATP, resulting in the formation of a stable complex. GrpE releases ADP from DnaK; ATP binding to DnaK triggers the release of the substrate protein, thus completing the reaction cycle. Several rounds of ATP-dependent interactions between DnaJ, DnaK and GrpE are required for fully efficient folding. Also involved, together with DnaK and GrpE, in the DNA replication of plasmids through activation of initiation proteins. This chain is Chaperone protein DnaJ, found in Staphylococcus epidermidis (strain ATCC 35984 / DSM 28319 / BCRC 17069 / CCUG 31568 / BM 3577 / RP62A).